The following is a 218-amino-acid chain: MRIILLGAPGAGKGTQAKIIEQKYNIAHISTGDMIRETIKSGSVLGQELKKVLDAGELVSDEFIIKIVKDRISKNDCNNGFLLDGVPRTIPQAQELDKLGVNIDYIVEVDVADNLLIERITGRRIHPASGRTYHTKFNPPKVADKDDVTGEPLITRTDDNEDTVKQRLSVYHAQTAKLIDFYRNFSSTNTKIPKYIKINGDQAVEKVSQDIFDQLNKR.

ATP is bound at residue 10–15; it reads GAGKGT. The NMP stretch occupies residues 30-59; sequence STGDMIRETIKSGSVLGQELKKVLDAGELV. Residues threonine 31, arginine 36, 57-59, and glutamine 92 contribute to the AMP site; that span reads ELV. The tract at residues 122–159 is LID; sequence GRRIHPASGRTYHTKFNPPKVADKDDVTGEPLITRTDD. ATP is bound by residues arginine 123 and 132-133; that span reads TY. AMP-binding residues include arginine 156 and arginine 167. An ATP-binding site is contributed by glutamine 202.

This sequence belongs to the adenylate kinase family. As to quaternary structure, monomer.

It localises to the cytoplasm. The catalysed reaction is AMP + ATP = 2 ADP. It participates in purine metabolism; AMP biosynthesis via salvage pathway; AMP from ADP: step 1/1. In terms of biological role, catalyzes the reversible transfer of the terminal phosphate group between ATP and AMP. Plays an important role in cellular energy homeostasis and in adenine nucleotide metabolism. This Francisella tularensis subsp. holarctica (strain LVS) protein is Adenylate kinase.